The chain runs to 383 residues: ATP phosphoribosyltransferase regulatory subunit (383 aa).

Belongs to the class-II aminoacyl-tRNA synthetase family. HisZ subfamily. Heteromultimer composed of HisG and HisZ subunits.

The protein localises to the cytoplasm. It participates in amino-acid biosynthesis; L-histidine biosynthesis; L-histidine from 5-phospho-alpha-D-ribose 1-diphosphate: step 1/9. In terms of biological role, required for the first step of histidine biosynthesis. May allow the feedback regulation of ATP phosphoribosyltransferase activity by histidine. This Cupriavidus necator (strain ATCC 17699 / DSM 428 / KCTC 22496 / NCIMB 10442 / H16 / Stanier 337) (Ralstonia eutropha) protein is ATP phosphoribosyltransferase regulatory subunit.